The following is a 599-amino-acid chain: MENIRNFSIIAHVDHGKSTLADRLIEFCGAITDREKKDQMLDTLDIERERGITIKLQAVKINYHSKIQNKDFTLHLIDTPGHVDFSYEVSRSLAACEGALLLIDASQGIEAQTVANFWKAVEQNLVIIPVINKIDLPAADPDRIKLQIRDILGLDPDEAILASAKEGIGIEEILEAITKRIPPPKGDENAPLKALIFDSYYDPYRGAVAFVRIFDGSLKVGDRIKLFSTGKEFEVTEVGAQTPKMTKLPILKAGDVGYIAASIKDVRDIRVGDTITLKSNPTKEAIPGFKTAKPMVFAGLYPTEDSDFEELRDALEKYSINDAAITYEPETSPAIGMGFRCGFLGLLHMEIVQERLSREYNIDVITTAPSVVYRLKLKNRSDILEVKSSNDIPDNFGLIEYIEEPYVLATIITPKDYVGNIINICQDKRGIQVKFSYLDQNTALLEYEMPLQEIIVDFHDKIKSASKGYASFDYEFLGYKESDLVKLTIMINKEPVDALSFLVHKDKAYRKARALVEQLKETIPRQLFEINVQAAIGSKIIASERIPPMRANVTAKCYGGDISRKRKLLEKQKEGKKRMKQFGKVSLPQEAFLSVLKAQ.

One can recognise a tr-type G domain in the interval 2 to 185 (ENIRNFSIIA…AITKRIPPPK (184 aa)). GTP-binding positions include 14 to 19 (DHGKST) and 132 to 135 (NKID).

This sequence belongs to the TRAFAC class translation factor GTPase superfamily. Classic translation factor GTPase family. LepA subfamily.

The protein localises to the cell inner membrane. The enzyme catalyses GTP + H2O = GDP + phosphate + H(+). Functionally, required for accurate and efficient protein synthesis under certain stress conditions. May act as a fidelity factor of the translation reaction, by catalyzing a one-codon backward translocation of tRNAs on improperly translocated ribosomes. Back-translocation proceeds from a post-translocation (POST) complex to a pre-translocation (PRE) complex, thus giving elongation factor G a second chance to translocate the tRNAs correctly. Binds to ribosomes in a GTP-dependent manner. This chain is Elongation factor 4, found in Hydrogenobaculum sp. (strain Y04AAS1).